Here is a 701-residue protein sequence, read N- to C-terminus: MSDDQQYNQDKLSQDFQNTSIGSGEQQQQSYQQYQQQPQQNNFNANSAPTFTPSGQQGGYQGGYQGGYQGGYQNYSQGGYQNYNQGYQNYNQGYQGYQNNNRGGYNNYNNRGGYNNYNNYNQQDQQPVQNQGMSLADFQKQQNAQANLNKPKKTLKLASSSGIKLANAKKAPETESKEATPAATEKEATPAATEKEATPAATEKEATPAATEKETTPAPAKKEATPASVKSESKPASKSTSKVATKESTPVTSDKVIQEQVDEVDEEVVKDMFGGKDHVSIIFMGHVDAGKSTMGGNILYLTGSVDKRTVDKYEREAKDAGRQGWYLSWVMDTNKEERSDGKTIEVGKAYFETEKRRYTILDAPGHKMYVSEMIGGASQADVGILVISARKGEYETGFEKGGQTREHALLAKTQGVNKIIVVVNKMDDPTVGWAEDRYKDCITKLGTFLKGIGYAKDDIIFMPVSGYTGAGIKDRVNPKDCPWYSGPSLLEFLDNMKTMQRHINGPFMLPISGKMKDMGTIIEGKIESGHIKKGGNLLLMPNKASIEVVAIFNETEQECDAAFCGEQVRLKIKGVEEEDLAPGYVLTSPLKPIKTITRFEAQIAIVELKSILSNGFSCVMHLHTAIEEVTFIELKHKLEKGTNRKSKKPPAFAKKGMKVIAILETNESVCAETYADYPQLGRFTLRDQGTTIAIGKITKVL.

Residues M1–E25 are compositionally biased toward polar residues. Disordered stretches follow at residues M1–G63, N91–D124, and K164–E259. The interval S20–Q131 is several sort of repeats. Low complexity predominate over residues Q26 to Q40. Over residues N41–S54 the composition is skewed to polar residues. The tract at residues G132–D271 is charged. Basic and acidic residues predominate over residues K170 to A224. The segment covering S228–T252 has biased composition (polar residues). Residues K276 to R501 enclose the tr-type G domain. Residues G285–S292 form a G1 region. G285–S292 contacts GTP. The G2 stretch occupies residues G341–E345. T359 bears the Phosphothreonine mark. A G3 region spans residues D362–G365. GTP-binding positions include D362–H366 and N424–D427. Positions N424–D427 are G4. The tract at residues S465–Y467 is G5.

Belongs to the TRAFAC class translation factor GTPase superfamily. Classic translation factor GTPase family. ERF3 subfamily.

The protein localises to the cytoplasm. Functionally, involved in translation termination. Stimulates the activity of ERF1. Binds guanine nucleotides. This chain is Eukaryotic peptide chain release factor GTP-binding subunit (SUP35), found in Debaryomyces hansenii (strain ATCC 36239 / CBS 767 / BCRC 21394 / JCM 1990 / NBRC 0083 / IGC 2968) (Yeast).